The primary structure comprises 270 residues: MTRSIFIHTLLALSALTSVHGANSPGCGKNPTLANGVHQINGREYTLKIPDDYDANNPYHLIFGLHWRGGNMDNVVSGDSIQPWYGLESRAQGSAIFIAPNGLNAGWANTNGEDVAFIDAIMEQVESDLCVDQSSRFATGFSWGGGMSYSLACSRAKEFRAVSVLSGGVISGCDGGNDPIAYLGIHGINDPVLPFDGGVELAERFVGNNGCQPASIEKPQSGSNGWKRTDFYGCSKPVSFIAYDGGHDGAPLGVQSSLAPDATWEFFMAA.

An N-terminal signal peptide occupies residues 1 to 21 (MTRSIFIHTLLALSALTSVHG).

This sequence belongs to the faeC family.

It localises to the secreted. It carries out the reaction feruloyl-polysaccharide + H2O = ferulate + polysaccharide.. In terms of biological role, involved in degradation of plant cell walls. Hydrolyzes the feruloyl-arabinose ester bond in arabinoxylans, and the feruloyl-galactose ester bond in pectin. Active against paranitrophenyl-acetate, methyl ferulate and wheat arabinoxylan. The protein is Probable feruloyl esterase C (faeC) of Aspergillus niger (strain ATCC MYA-4892 / CBS 513.88 / FGSC A1513).